The following is a 914-amino-acid chain: Inter-alpha-trypsin inhibitor heavy chain H1 (914 aa).

Residues 1–30 (MDGAAVGLRVLLGLGLVSLLTLEAMPAAWG) form the signal peptide. The propeptide occupies 31 to 36 (LATTGR). The VIT domain maps to 39–168 (AREKRQAVDT…KATFQLTYEE (130 aa)). A glycan (S-linked (Hex...) cysteine) is linked at Cys-62. The residue at position 131 (Ser-131) is a Phosphoserine. N-linked (GlcNAc...) asparagine glycosylation is found at Asn-288 and Asn-291. Residues 293-453 (SKNLVFVIDI…FNFLEVMSME (161 aa)) form the VWFA domain. Thr-405 and Thr-410 each carry phosphothreonine. A glycan (N-linked (GlcNAc...) asparagine) is linked at Asn-591. Residue Thr-656 is glycosylated (O-linked (GalNAc...) threonine). At Asp-675 the chain carries Aspartate 1-(chondroitin 4-sulfate)-ester. Residues 676 to 914 (PHFIIYVPQK…HTDYIVPDIF (239 aa)) constitute a propeptide that is removed on maturation.

It belongs to the ITIH family. In terms of assembly, I-alpha-I plasma protease inhibitors are assembled from one or two heavy chains (HC) and one light chain, bikunin. Inter-alpha-inhibitor (I-alpha-I) is composed of ITIH1/HC1, ITIH2/HC2 and bikunin. Interacts with TNFAIP6 (via Link and CUB domains). Post-translationally, heavy chains are linked to bikunin via chondroitin 4-sulfate esterified to the alpha-carboxyl of the C-terminal aspartate after propeptide cleavage. The S-linked glycan is composed of two 6-carbon sugars, possibly Glc or Gal.

The protein localises to the secreted. Its function is as follows. May act as a carrier of hyaluronan in serum or as a binding protein between hyaluronan and other matrix protein, including those on cell surfaces in tissues to regulate the localization, synthesis and degradation of hyaluronan which are essential to cells undergoing biological processes. This is Inter-alpha-trypsin inhibitor heavy chain H1 (ITIH1) from Mesocricetus auratus (Golden hamster).